A 559-amino-acid chain; its full sequence is Formate--tetrahydrofolate ligase (559 aa).

68-75 (TPAGEGKT) provides a ligand contact to ATP.

Belongs to the formate--tetrahydrofolate ligase family.

It catalyses the reaction (6S)-5,6,7,8-tetrahydrofolate + formate + ATP = (6R)-10-formyltetrahydrofolate + ADP + phosphate. It participates in one-carbon metabolism; tetrahydrofolate interconversion. This chain is Formate--tetrahydrofolate ligase, found in Moorella thermoacetica (strain ATCC 39073 / JCM 9320).